Here is a 286-residue protein sequence, read N- to C-terminus: MASGKEIKSKIGSIKNTQKITSAMEMVAASKMKRAQERVATSRPYAAKLRTVIGRVAQANLDFTHPFLEEREVKRVGYIVISTDRGLCGGLNSNEFKKVALDIKAWKEKGVSAEFATLGSKAAGFFQRFGGQVLAKKAGLGDKPSIQDIIGPVKVMLDAFSEGKIDRLFLVYNKFVNTMKQEPTVDQLLPLPKAEEEVSAHTWDYLYEPNPDAILEALLVRFVESQVYQGVVENAASEQAARMVAMKAATDNAGDLMDELQLIYNKARQAAITQEISEICSGSAAV.

Belongs to the ATPase gamma chain family. F-type ATPases have 2 components, CF(1) - the catalytic core - and CF(0) - the membrane proton channel. CF(1) has five subunits: alpha(3), beta(3), gamma(1), delta(1), epsilon(1). CF(0) has three main subunits: a, b and c.

Its subcellular location is the cell inner membrane. Functionally, produces ATP from ADP in the presence of a proton gradient across the membrane. The gamma chain is believed to be important in regulating ATPase activity and the flow of protons through the CF(0) complex. This is ATP synthase gamma chain from Pseudoalteromonas translucida (strain TAC 125).